A 554-amino-acid polypeptide reads, in one-letter code: Inactive sesquithujene synthase B (554 aa).

The Mg(2+) site is built by Asp-308 and Asp-312. Residues Asp-308, Asp-312, Arg-449, and Asn-452 each coordinate substrate. The DDXXD motif motif lies at Asp-308–Asp-312. 3 residues coordinate Mg(2+): Asn-452, Ser-456, and Glu-460.

Belongs to the terpene synthase family. As to quaternary structure, monomer. Mg(2+) serves as cofactor. Mn(2+) is required as a cofactor.

It localises to the cytoplasm. It participates in secondary metabolite biosynthesis; terpenoid biosynthesis. Functionally, non-functional sesquiterpene synthase having less than 1% of the activity found in TPS5A. The chain is Inactive sesquithujene synthase B from Zea mays (Maize).